The primary structure comprises 703 residues: Protein FAR1-RELATED SEQUENCE 6 (703 aa).

Residues 1-29 (MERSESVDEDVQASAYLENDEVRERDDPM) form a disordered region. In terms of domain architecture, FAR1 spans 99 to 184 (NYYNCYASEV…TLDHNHLLGC (86 aa)). In terms of domain architecture, MULE spans 297-392 (VIFIDSSYIS…SLTHIMRKIP (96 aa)). An SWIM-type zinc finger spans residues 584 to 620 (FEVLYNRSVGEVRCICSCFNFYGYLCRHALCVLNFNG).

This sequence belongs to the FHY3/FAR1 family. As to expression, expressed in hypocotyls, rosette and cauline leaves, inflorescences stems, flowers and siliques.

It localises to the nucleus. Functionally, putative transcription activator involved in regulating light control of development. May have a role in controlling flowering time. This Arabidopsis thaliana (Mouse-ear cress) protein is Protein FAR1-RELATED SEQUENCE 6 (FRS6).